A 957-amino-acid chain; its full sequence is Melanoma-associated antigen E1 (957 aa).

The tract at residues 1–433 (MSLVSQNSRR…RNPSKCSIVL (433 aa)) is disordered. Polar residues-rich tracts occupy residues 85–96 (SEASSASGQPTV) and 104–130 (LLAT…SVTL). Residues 138–156 (TSRPPTSSEEPSTSVPATP) are compositionally biased toward low complexity. Composition is skewed to polar residues over residues 158-177 (EGTS…TSVV), 220-232 (LSTS…TEGL), 256-306 (RSTT…GPST), 328-344 (LSTS…STSV), 364-380 (RSTS…DTSV), and 414-428 (TLFS…NPSK). 2 MAGE domains span residues 491–690 (MEQN…YNEA) and 745–936 (LESK…YREA). The interaction with DTNA stretch occupies residues 743–957 (SRLESKARKL…HRQFFVHNFR (215 aa)).

In terms of assembly, interacts with DTNA. Interacts with TRIM28.

It localises to the cytoplasm. The protein localises to the perinuclear region. Its subcellular location is the nucleus. It is found in the cell membrane. Functionally, may enhance ubiquitin ligase activity of RING-type zinc finger-containing E3 ubiquitin-protein ligases. Proposed to act through recruitment and/or stabilization of the Ubl-conjugating enzyme (E2) at the E3:substrate complex. In Macaca fascicularis (Crab-eating macaque), this protein is Melanoma-associated antigen E1 (MAGEE1).